The following is a 205-amino-acid chain: ATP synthase subunit b (205 aa).

An N-terminal signal peptide occupies residues 1 to 27; sequence MKLNKKHLVAILSVLSLSIIVVPLLTS. A lipid anchor (N-palmitoyl cysteine) is attached at Cys-28. Residue Cys-28 is the site of S-diacylglycerol cysteine attachment. Residues 48 to 68 traverse the membrane as a helical segment; the sequence is VWVFIAQVIAMCVVFSLVLWL.

It belongs to the ATPase B chain family. In terms of assembly, F-type ATPases have 2 components, F(1) - the catalytic core - and F(0) - the membrane proton channel. F(1) has five subunits: alpha(3), beta(3), gamma(1), delta(1), epsilon(1). F(0) has three main subunits: a(1), b(2) and c(10-14). The alpha and beta chains form an alternating ring which encloses part of the gamma chain. F(1) is attached to F(0) by a central stalk formed by the gamma and epsilon chains, while a peripheral stalk is formed by the delta and b chains.

The protein localises to the cell membrane. Functionally, f(1)F(0) ATP synthase produces ATP from ADP in the presence of a proton or sodium gradient. F-type ATPases consist of two structural domains, F(1) containing the extramembraneous catalytic core and F(0) containing the membrane proton channel, linked together by a central stalk and a peripheral stalk. During catalysis, ATP synthesis in the catalytic domain of F(1) is coupled via a rotary mechanism of the central stalk subunits to proton translocation. Its function is as follows. Component of the F(0) channel, it forms part of the peripheral stalk, linking F(1) to F(0). This Ureaplasma parvum serovar 3 (strain ATCC 27815 / 27 / NCTC 11736) protein is ATP synthase subunit b.